We begin with the raw amino-acid sequence, 349 residues long: Cobalt-precorrin-5B C(1)-methyltransferase (349 aa).

It belongs to the CbiD family.

The enzyme catalyses Co-precorrin-5B + S-adenosyl-L-methionine = Co-precorrin-6A + S-adenosyl-L-homocysteine. It functions in the pathway cofactor biosynthesis; adenosylcobalamin biosynthesis; cob(II)yrinate a,c-diamide from sirohydrochlorin (anaerobic route): step 6/10. Its function is as follows. Catalyzes the methylation of C-1 in cobalt-precorrin-5B to form cobalt-precorrin-6A. In Saccharolobus islandicus (strain L.S.2.15 / Lassen #1) (Sulfolobus islandicus), this protein is Cobalt-precorrin-5B C(1)-methyltransferase.